The chain runs to 485 residues: GTPase Obg (485 aa).

The Obg domain maps to 1–159 (MKFVDEVRIF…LTLRLELKLL (159 aa)). The region spanning 160–332 (ADVGLLGFPN…LMDSVAEVLF (173 aa)) is the OBG-type G domain. GTP contacts are provided by residues 166–173 (GFPNAGKS), 191–195 (FTTLV), 213–216 (DIPG), 284–287 (NKLD), and 313–315 (SCA). Serine 173 and threonine 193 together coordinate Mg(2+). Composition is skewed to low complexity over residues 367 to 385 (AGAAAATKSATKKSAAAKK), 394 to 428 (RKAGAVAKTSAARKAGTAAAKKAPARKSGTAPVKK), 437 to 446 (RKSGTAPAKK), and 455 to 474 (RKSGSSGKAAAKKASAATKR). Residues 367–485 (AGAAAATKSA…PARKSGGGRS (119 aa)) are disordered.

Belongs to the TRAFAC class OBG-HflX-like GTPase superfamily. OBG GTPase family. Monomer. Requires Mg(2+) as cofactor.

Its subcellular location is the cytoplasm. In terms of biological role, an essential GTPase which binds GTP, GDP and possibly (p)ppGpp with moderate affinity, with high nucleotide exchange rates and a fairly low GTP hydrolysis rate. Plays a role in control of the cell cycle, stress response, ribosome biogenesis and in those bacteria that undergo differentiation, in morphogenesis control. In Myxococcus xanthus (strain DK1622), this protein is GTPase Obg.